Reading from the N-terminus, the 430-residue chain is Tryptophan synthase beta chain (430 aa).

An N6-(pyridoxal phosphate)lysine modification is found at Lys95.

Belongs to the TrpB family. As to quaternary structure, tetramer of two alpha and two beta chains. Pyridoxal 5'-phosphate is required as a cofactor.

It carries out the reaction (1S,2R)-1-C-(indol-3-yl)glycerol 3-phosphate + L-serine = D-glyceraldehyde 3-phosphate + L-tryptophan + H2O. It participates in amino-acid biosynthesis; L-tryptophan biosynthesis; L-tryptophan from chorismate: step 5/5. The beta subunit is responsible for the synthesis of L-tryptophan from indole and L-serine. The sequence is that of Tryptophan synthase beta chain from Halobacterium salinarum (strain ATCC 29341 / DSM 671 / R1).